Reading from the N-terminus, the 292-residue chain is Bifunctional protein FolD (292 aa).

NADP(+)-binding positions include 171–173 (GAS), Ile196, and Ile237.

The protein belongs to the tetrahydrofolate dehydrogenase/cyclohydrolase family. In terms of assembly, homodimer.

The enzyme catalyses (6R)-5,10-methylene-5,6,7,8-tetrahydrofolate + NADP(+) = (6R)-5,10-methenyltetrahydrofolate + NADPH. It carries out the reaction (6R)-5,10-methenyltetrahydrofolate + H2O = (6R)-10-formyltetrahydrofolate + H(+). It functions in the pathway one-carbon metabolism; tetrahydrofolate interconversion. Functionally, catalyzes the oxidation of 5,10-methylenetetrahydrofolate to 5,10-methenyltetrahydrofolate and then the hydrolysis of 5,10-methenyltetrahydrofolate to 10-formyltetrahydrofolate. This chain is Bifunctional protein FolD, found in Helicobacter acinonychis (strain Sheeba).